The primary structure comprises 132 residues: Small ribosomal subunit protein eS24 (132 aa).

Residues 90–100 (RLARHGLFEKK) show a composition bias toward basic and acidic residues. A disordered region spans residues 90-132 (RLARHGLFEKKKTSRKQRKERKNRMKKVRGTKKASVGASKKKD). Residues 101–121 (KTSRKQRKERKNRMKKVRGTK) are compositionally biased toward basic residues.

It belongs to the eukaryotic ribosomal protein eS24 family. Component of the small ribosomal subunit.

Its subcellular location is the cytoplasm. In terms of biological role, component of the small ribosomal subunit. The ribosome is a large ribonucleoprotein complex responsible for the synthesis of proteins in the cell. Required for processing of pre-rRNA and maturation of 40S ribosomal subunits. In Takifugu rubripes (Japanese pufferfish), this protein is Small ribosomal subunit protein eS24 (rps24).